A 219-amino-acid polypeptide reads, in one-letter code: Ribose-5-phosphate isomerase A (219 aa).

Residues 28–31 (TGST), 81–84 (DGAD), and 94–97 (KGGG) contribute to the substrate site. The active-site Proton acceptor is the Glu-103. Lys-121 contributes to the substrate binding site.

It belongs to the ribose 5-phosphate isomerase family. Homodimer.

The catalysed reaction is aldehydo-D-ribose 5-phosphate = D-ribulose 5-phosphate. Its pathway is carbohydrate degradation; pentose phosphate pathway; D-ribose 5-phosphate from D-ribulose 5-phosphate (non-oxidative stage): step 1/1. In terms of biological role, catalyzes the reversible conversion of ribose-5-phosphate to ribulose 5-phosphate. The sequence is that of Ribose-5-phosphate isomerase A from Shewanella pealeana (strain ATCC 700345 / ANG-SQ1).